A 114-amino-acid chain; its full sequence is Ribonuclease P protein component (114 aa).

The protein belongs to the RnpA family. In terms of assembly, consists of a catalytic RNA component (M1 or rnpB) and a protein subunit.

The enzyme catalyses Endonucleolytic cleavage of RNA, removing 5'-extranucleotides from tRNA precursor.. Functionally, RNaseP catalyzes the removal of the 5'-leader sequence from pre-tRNA to produce the mature 5'-terminus. It can also cleave other RNA substrates such as 4.5S RNA. The protein component plays an auxiliary but essential role in vivo by binding to the 5'-leader sequence and broadening the substrate specificity of the ribozyme. The chain is Ribonuclease P protein component from Limosilactobacillus fermentum (strain NBRC 3956 / LMG 18251) (Lactobacillus fermentum).